The following is a 313-amino-acid chain: uncharacterized protein (313 aa).

Helical transmembrane passes span 19–41 (GLAV…AGFL), 51–68 (AIIG…IFFL), and 81–103 (IAEF…DFAI).

It localises to the cell membrane. This is an uncharacterized protein from Aquifex aeolicus (strain VF5).